A 303-amino-acid polypeptide reads, in one-letter code: Ribonuclease HIII (303 aa).

The region spanning 85–302 is the RNase H type-2 domain; sequence CSLIGSDEVG…TKKAYQLLKK (218 aa). The a divalent metal cation site is built by Asp-91, Glu-92, and Asp-196.

This sequence belongs to the RNase HII family. RnhC subfamily. Requires Mn(2+) as cofactor. Mg(2+) serves as cofactor.

The protein localises to the cytoplasm. The catalysed reaction is Endonucleolytic cleavage to 5'-phosphomonoester.. Endonuclease that specifically degrades the RNA of RNA-DNA hybrids. The protein is Ribonuclease HIII of Streptococcus mutans serotype c (strain ATCC 700610 / UA159).